A 154-amino-acid chain; its full sequence is Ribosome maturation factor RimP (154 aa).

Belongs to the RimP family.

The protein localises to the cytoplasm. Its function is as follows. Required for maturation of 30S ribosomal subunits. The chain is Ribosome maturation factor RimP from Salmonella agona (strain SL483).